The primary structure comprises 310 residues: Prephenate dehydratase (310 aa).

The region spanning 3–190 (RIAYLGPEGT…ARTRFVLVGL (188 aa)) is the Prephenate dehydratase domain. The 78-residue stretch at 204-281 (AVVLRLVNEP…VDVRYLGSWP (78 aa)) folds into the ACT domain.

In terms of assembly, homodimer.

The enzyme catalyses prephenate + H(+) = 3-phenylpyruvate + CO2 + H2O. Its pathway is amino-acid biosynthesis; L-phenylalanine biosynthesis; phenylpyruvate from prephenate: step 1/1. The sequence is that of Prephenate dehydratase (pheA) from Mycolicibacterium smegmatis (strain ATCC 700084 / mc(2)155) (Mycobacterium smegmatis).